The following is a 345-amino-acid chain: S-adenosylmethionine:tRNA ribosyltransferase-isomerase (345 aa).

The protein belongs to the QueA family. Monomer.

It is found in the cytoplasm. It catalyses the reaction 7-aminomethyl-7-carbaguanosine(34) in tRNA + S-adenosyl-L-methionine = epoxyqueuosine(34) in tRNA + adenine + L-methionine + 2 H(+). Its pathway is tRNA modification; tRNA-queuosine biosynthesis. Transfers and isomerizes the ribose moiety from AdoMet to the 7-aminomethyl group of 7-deazaguanine (preQ1-tRNA) to give epoxyqueuosine (oQ-tRNA). This Thermus thermophilus (strain ATCC BAA-163 / DSM 7039 / HB27) protein is S-adenosylmethionine:tRNA ribosyltransferase-isomerase.